We begin with the raw amino-acid sequence, 304 residues long: Porphobilinogen deaminase (304 aa).

The residue at position 240 (Cys240) is an S-(dipyrrolylmethanemethyl)cysteine.

This sequence belongs to the HMBS family. In terms of assembly, monomer. Requires dipyrromethane as cofactor.

It carries out the reaction 4 porphobilinogen + H2O = hydroxymethylbilane + 4 NH4(+). The protein operates within porphyrin-containing compound metabolism; protoporphyrin-IX biosynthesis; coproporphyrinogen-III from 5-aminolevulinate: step 2/4. In terms of biological role, tetrapolymerization of the monopyrrole PBG into the hydroxymethylbilane pre-uroporphyrinogen in several discrete steps. This is Porphobilinogen deaminase from Xanthomonas oryzae pv. oryzae (strain KACC10331 / KXO85).